Consider the following 504-residue polypeptide: L-carnitine/gamma-butyrobetaine antiporter (504 aa).

Transmembrane regions (helical) follow at residues 10 to 30 (IEPK…WLTV), 51 to 71 (WGWA…WLVF), 92 to 112 (IFMM…SIEI), 143 to 163 (GPLP…FFFV), 195 to 215 (FYLV…TPLV), 231 to 251 (LDAI…ACGL), 263 to 283 (SYLS…SFIM), 316 to 336 (WTVF…IFLA), 347 to 367 (LCFG…TVLG), 398 to 418 (WAAL…CFIA), 446 to 466 (LLVR…LLAL), and 475 to 495 (AIIA…LSFI).

Belongs to the BCCT transporter (TC 2.A.15) family. CaiT subfamily. As to quaternary structure, homotrimer.

It is found in the cell inner membrane. It carries out the reaction 4-(trimethylamino)butanoate(in) + (R)-carnitine(out) = 4-(trimethylamino)butanoate(out) + (R)-carnitine(in). The protein operates within amine and polyamine metabolism; carnitine metabolism. Its function is as follows. Catalyzes the exchange of L-carnitine for gamma-butyrobetaine. The polypeptide is L-carnitine/gamma-butyrobetaine antiporter (Escherichia coli O81 (strain ED1a)).